The chain runs to 255 residues: uncharacterized protein (255 aa).

The next 2 helical transmembrane spans lie at I99–F119 and Y146–L166.

It localises to the mitochondrion membrane. This is an uncharacterized protein from Schizosaccharomyces pombe (strain 972 / ATCC 24843) (Fission yeast).